Reading from the N-terminus, the 893-residue chain is Sperm-associated antigen 1 (893 aa).

A compositionally biased stretch (basic and acidic residues) spans 112–126 (ENTRHFHDPEKHPGV). The interval 112 to 155 (ENTRHFHDPEKHPGVEDPLPPVRGSNSCPRGGKETSSKSKTAKK) is disordered. 3 TPR repeats span residues 213-246 (ANREKGKGNEAFYSGDYEEAVMYYTRSLSALPTA), 247-279 (TAYNNRAQAEIKLQRWSSALEDCEKALELEPGN), and 280-313 (IKALLRRATTYKHQNKFLEAVDDLRKVLQAEPDN). Disordered stretches follow at residues 324-344 (ERELKNSEPASELQTKGKRMV), 349-368 (ENSGDEGGKGDEDDHEDDGV), and 373-437 (MGNI…SRGN). Position 351 is a phosphoserine (Ser-351). Positions 403-415 (QEGQPETGTASTS) are enriched in polar residues. Residues 416–437 (DNHDLEERRAADSPGDLKSRGN) show a composition bias toward basic and acidic residues. TPR repeat units follow at residues 429 to 463 (PGDLKSRGNELFRGGQFAEAAVQYSGAIAQLEPTG), 471 to 504 (SILYSNRAACYLKEGNCRGCIQDCDRALELQPFA), 506 to 538 (KPLLRRAMAYETLEQYRSAYVDYITVLKIDCRI), 605 to 638 (FQALKEEGNQLVKDKNYKDAISKYNECLKINSKA), and 639 to 672 (CAIYTNRALCYLKLGQFEEAKLDCDKALQIDSKN). 630–637 (ECLKINSK) contacts GTP. Position 703 is a phosphoserine (Ser-703). The disordered stretch occupies residues 704 to 756 (PDSSEAARHLDTKNDTAPPSRERERRRIEIQEVDDSSDEEPERPAEASAVEEG). Positions 708–733 (EAARHLDTKNDTAPPSRERERRRIEI) are enriched in basic and acidic residues. Positions 734 to 744 (QEVDDSSDEEP) are enriched in acidic residues. Phosphoserine is present on residues Ser-739, Ser-740, and Ser-758.

As to expression, testis and sperm.

The protein localises to the cytoplasm. Its subcellular location is the dynein axonemal particle. May play a role in the cytoplasmic assembly of the ciliary dynein arms. Binds GTP and has GTPase activity. Plays a role in fertilization. This Rattus norvegicus (Rat) protein is Sperm-associated antigen 1 (Spag1).